Reading from the N-terminus, the 61-residue chain is Bactericidin B-5P (61 aa).

A signal peptide spans 1-22 (MNFSRVLFFVFACLSAFAMASA). A propeptide spans 23-24 (AP) (removed by a dipeptidylpeptidase). Glycine amide is present on Gly-60.

Belongs to the cecropin family.

Its subcellular location is the secreted. Its function is as follows. Cecropins have lytic and antibacterial activity against several Gram-positive and Gram-negative bacteria. The polypeptide is Bactericidin B-5P (Manduca sexta (Tobacco hawkmoth)).